Reading from the N-terminus, the 737-residue chain is Protein kinase C epsilon type (737 aa).

The C2 domain maps to 1–117 (MVVFNGLLKI…NGSRHFEDWI (117 aa)). At S62 the chain carries Phosphoserine. The Phorbol-ester/DAG-type 1 zinc-finger motif lies at 169-220 (GHKFMATYLRQPTYCSHCRDFIWGVIGKQGYQCQVCTCVVHKRCHELIITKC). An Interaction with actin motif is present at residues 223–228 (LKKQET). At T228 the chain carries Phosphothreonine. Residue S234 is modified to Phosphoserine. The segment at 242–292 (PHKFGIHNYKVPTFCDHCGSLLWGLLRQGLQCKVCKMNVHRRCETNVAPNC) adopts a Phorbol-ester/DAG-type 2 zinc-finger fold. Residue T309 is modified to Phosphothreonine. A disordered region spans residues 310–356 (PDKITNSGQRRKKLAAGAESPQPASGNSPSEDDRSKSAPTSPCDQEL). S316, S329, S337, and S346 each carry phosphoserine. A Phosphothreonine modification is found at T349. Residue S350 is modified to Phosphoserine; by MAPK11 and MAPK14. 2 positions are modified to phosphoserine: S368 and S388. Residues 369-398 (FDNRGEEHRASSSTDGQLASPGENGEVRQG) are disordered. The region spanning 408–668 (FNFIKVLGKG…EDAIKQHPFF (261 aa)) is the Protein kinase domain. ATP-binding positions include 414–422 (LGKGSFGKV) and K437. Catalysis depends on D532, which acts as the Proton acceptor. T566 bears the Phosphothreonine; by PDPK1 mark. The AGC-kinase C-terminal domain occupies 669-737 (KEIDWVLLEQ…FSYFGEDLMP (69 aa)). Residues T703 and T710 each carry the phosphothreonine modification. A Phosphoserine modification is found at S729.

This sequence belongs to the protein kinase superfamily. AGC Ser/Thr protein kinase family. PKC subfamily. As to quaternary structure, forms a ternary complex with TRIM63 and RACK1/GN2BL1. Can form a complex with PDLIM5 and N-type calcium channel. Interacts with COPB1. Interacts with DGKQ. Interacts with STAT3. Interacts with YWHAB. Interacts with HSP90AB1; promotes functional activation in a heat shock-dependent manner. Interacts (via phorbol-ester/DAG-type 2 domain) with PRPH and VIM. Interacts with NLRP5/MATER. In terms of processing, phosphorylation on Thr-566 by PDPK1 triggers autophosphorylation on Ser-729. Phosphorylation in the hinge domain at Ser-350 by MAPK11 or MAPK14, Ser-346 by GSK3B and Ser-368 by autophosphorylation is required for interaction with YWHAB. In response to growth factors, phosphorylated at Thr-703 and Ser-729 by the mTORC2 complex, promoting autophosphorylation and activation of PRKCE.

The protein resides in the cytoplasm. It is found in the cytoskeleton. It localises to the cell membrane. The protein localises to the perinuclear region. Its subcellular location is the nucleus. The catalysed reaction is L-seryl-[protein] + ATP = O-phospho-L-seryl-[protein] + ADP + H(+). It catalyses the reaction L-threonyl-[protein] + ATP = O-phospho-L-threonyl-[protein] + ADP + H(+). With respect to regulation, novel PKCs (PRKCD, PRKCE, PRKCH and PRKCQ) are calcium-insensitive, but activated by diacylglycerol (DAG) and phosphatidylserine. Three specific sites; Thr-566 (activation loop of the kinase domain), Thr-710 (turn motif) and Ser-729 (hydrophobic region), need to be phosphorylated for its full activation. Functionally, calcium-independent, phospholipid- and diacylglycerol (DAG)-dependent serine/threonine-protein kinase that plays essential roles in the regulation of multiple cellular processes linked to cytoskeletal proteins, such as cell adhesion, motility, migration and cell cycle, functions in neuron growth and ion channel regulation, and is involved in immune response, cancer cell invasion and regulation of apoptosis. Mediates cell adhesion to the extracellular matrix via integrin-dependent signaling, by mediating angiotensin-2-induced activation of integrin beta-1 (ITGB1) in cardiac fibroblasts. Phosphorylates MARCKS, which phosphorylates and activates PTK2/FAK, leading to the spread of cardiomyocytes. Involved in the control of the directional transport of ITGB1 in mesenchymal cells by phosphorylating vimentin (VIM), an intermediate filament (IF) protein. In epithelial cells, associates with and phosphorylates keratin-8 (KRT8), which induces targeting of desmoplakin at desmosomes and regulates cell-cell contact. Phosphorylates IQGAP1, which binds to CDC42, mediating epithelial cell-cell detachment prior to migration. During cytokinesis, forms a complex with YWHAB, which is crucial for daughter cell separation, and facilitates abscission by a mechanism which may implicate the regulation of RHOA. In cardiac myocytes, regulates myofilament function and excitation coupling at the Z-lines, where it is indirectly associated with F-actin via interaction with COPB1. During endothelin-induced cardiomyocyte hypertrophy, mediates activation of PTK2/FAK, which is critical for cardiomyocyte survival and regulation of sarcomere length. Plays a role in the pathogenesis of dilated cardiomyopathy via persistent phosphorylation of troponin I (TNNI3). Involved in nerve growth factor (NFG)-induced neurite outgrowth and neuron morphological change independently of its kinase activity, by inhibition of RHOA pathway, activation of CDC42 and cytoskeletal rearrangement. May be involved in presynaptic facilitation by mediating phorbol ester-induced synaptic potentiation. Phosphorylates gamma-aminobutyric acid receptor subunit gamma-2 (GABRG2), which reduces the response of GABA receptors to ethanol and benzodiazepines and may mediate acute tolerance to the intoxicating effects of ethanol. Upon PMA treatment, phosphorylates the capsaicin- and heat-activated cation channel TRPV1, which is required for bradykinin-induced sensitization of the heat response in nociceptive neurons. Is able to form a complex with PDLIM5 and N-type calcium channel, and may enhance channel activities and potentiates fast synaptic transmission by phosphorylating the pore-forming alpha subunit CACNA1B (CaV2.2). Downstream of TLR4, plays an important role in the lipopolysaccharide (LPS)-induced immune response by phosphorylating and activating TICAM2/TRAM, which in turn activates the transcription factor IRF3 and subsequent cytokines production. In differentiating erythroid progenitors, is regulated by EPO and controls the protection against the TNFSF10/TRAIL-mediated apoptosis, via BCL2. May be involved in the regulation of the insulin-induced phosphorylation and activation of AKT1. Phosphorylates NLRP5/MATER and may thereby modulate AKT pathway activation in cumulus cells. Phosphorylates and activates LRRK1, which phosphorylates RAB proteins involved in intracellular trafficking. The sequence is that of Protein kinase C epsilon type (Prkce) from Rattus norvegicus (Rat).